Here is a 280-residue protein sequence, read N- to C-terminus: MQVTFTLVAALAGMASAAVAGERGSFGCATHEPTLEHIEISKKLAEEEATNATLFGLAAAATITVPTYFHVVASSQTVANGYITDKMLSDQLAVMNEDFAPHGISFNLVQTTRTINPTWARDGDELAMKRSLRKGDYGALNLYFLRDIGGAFGYCYFPTTASPGSASYIRDGCTILSSTVPGGSSTNYNLGRTVTHEVGHWFGLYHTFQGGCTGSGDSIADTPAQSSPSSGCPVGRDSCPNQPGVDPIHNYMDYSIDSCYEEFTPNQQTRMYSFFNQYRA.

The first 17 residues, 1 to 17 (MQVTFTLVAALAGMASA), serve as a signal peptide directing secretion. A glycan (N-linked (GlcNAc...) asparagine) is linked at Asn51. Residue His196 participates in Zn(2+) binding. Glu197 is a catalytic residue. Position 200 (His200) interacts with Zn(2+). Residues 217–236 (DSIADTPAQSSPSSGCPVGR) form a disordered region. A disulfide bridge connects residues Cys232 and Cys259.

The protein belongs to the peptidase M43B family.

The protein resides in the secreted. Its function is as follows. Secreted metalloproteinase that allows assimilation of proteinaceous substrates. The sequence is that of Extracellular metalloprotease GLRG_06286 from Colletotrichum graminicola (strain M1.001 / M2 / FGSC 10212) (Maize anthracnose fungus).